Here is a 350-residue protein sequence, read N- to C-terminus: sn-1 oleoyl-lipid 12-desaturase (350 aa).

The next 2 helical transmembrane spans lie at 41–61 (AWTQALLSVVMVGLGYWSLAI) and 64–84 (WFLLPIAWIFTGTALTGFFVI). A Histidine box-1 motif is present at residues 86–90 (HDCGH). A helical transmembrane segment spans residues 98–118 (WVNDLVGHIFMMPLIYPFHSW). Positions 122–126 (HNHHH) match the Histidine box-2 motif. Helical transmembrane passes span 196-216 (VAVVVLFAAVAFPTLIATTGI) and 219-239 (FVKFWFVPWLGYHFWMSTFTI). The short motif at 287–291 (HHLST) is the Histidine box-3 element.

Belongs to the fatty acid desaturase type 2 family. Fe(2+) is required as a cofactor.

Its subcellular location is the membrane. The enzyme catalyses a 1-[(9Z)-octadecenoyl]-2-acyl-glycerolipid + 2 reduced [2Fe-2S]-[ferredoxin] + O2 + 2 H(+) = a 1-[(9Z,12Z)-octadecdienoyl]-2-acyl-glycerolipid + 2 oxidized [2Fe-2S]-[ferredoxin] + 2 H2O. Its pathway is lipid metabolism; polyunsaturated fatty acid biosynthesis. Desaturase involved in fatty acid biosynthesis. Introduces a double bond at carbon 12 of oleoyl groups (18:1) attached to the sn-1 position of the glycerol moiety of membrane glycerolipids. The polypeptide is sn-1 oleoyl-lipid 12-desaturase (Anabaena variabilis).